We begin with the raw amino-acid sequence, 154 residues long: Superoxide dismutase [Cu-Zn] (154 aa).

H47, H49, and H64 together coordinate Cu cation. C58 and C147 are joined by a disulfide. Zn(2+) contacts are provided by H64, H72, H81, and D84. Residue H121 participates in Cu cation binding. R144 contributes to the substrate binding site.

It belongs to the Cu-Zn superoxide dismutase family. Homodimer. Cu cation is required as a cofactor. Requires Zn(2+) as cofactor.

The protein resides in the cytoplasm. It localises to the mitochondrion. The protein localises to the cell membrane. The enzyme catalyses 2 superoxide + 2 H(+) = H2O2 + O2. In terms of biological role, destroys radicals which are normally produced within the cells and which are toxic to biological systems. Destroys radicals produced by host defense mechanisms. This chain is Superoxide dismutase [Cu-Zn], found in Cryptococcus neoformans var. grubii serotype A (strain H99 / ATCC 208821 / CBS 10515 / FGSC 9487) (Filobasidiella neoformans var. grubii).